Consider the following 228-residue polypeptide: Probable septum site-determining protein MinC (228 aa).

The protein belongs to the MinC family. As to quaternary structure, interacts with MinD and FtsZ.

Cell division inhibitor that blocks the formation of polar Z ring septums. Rapidly oscillates between the poles of the cell to destabilize FtsZ filaments that have formed before they mature into polar Z rings. Prevents FtsZ polymerization. This is Probable septum site-determining protein MinC from Bacillus cereus (strain G9842).